We begin with the raw amino-acid sequence, 46 residues long: Iota-conotoxin-like R11.7 (46 aa).

Residues Pro-2 and Pro-11 each carry the 4-hydroxyproline modification. Disulfide bonds link Cys-5–Cys-19, Cys-12–Cys-22, Cys-18–Cys-27, and Cys-21–Cys-38. Pro-29 bears the 4-hydroxyproline mark. Phe-44 is modified (D-phenylalanine).

Belongs to the conotoxin I1 superfamily. Expressed by the venom duct.

Its subcellular location is the secreted. Functionally, iota-conotoxins bind to voltage-gated sodium channels (Nav) and act as agonists by shifting the voltage-dependence of activation to more hyperpolarized levels. Produces general excitatory symptoms. This Conus radiatus (Rayed cone) protein is Iota-conotoxin-like R11.7.